A 166-amino-acid chain; its full sequence is HTH-type transcriptional regulator PrsX (166 aa).

An HTH marR-type domain is found at 25–159 (EHLLMQLCIR…FEVINKKLLA (135 aa)).

It is found in the cytoplasm. The chain is HTH-type transcriptional regulator PrsX (prsX) from Escherichia coli O6:H1 (strain CFT073 / ATCC 700928 / UPEC).